The chain runs to 321 residues: Lipoyl synthase (321 aa).

The [4Fe-4S] cluster site is built by cysteine 68, cysteine 73, cysteine 79, cysteine 94, cysteine 98, cysteine 101, and serine 308. The Radical SAM core domain maps to 80-297; that stretch reads FNHGTATFMI…KEEALAMGFT (218 aa).

It belongs to the radical SAM superfamily. Lipoyl synthase family. [4Fe-4S] cluster is required as a cofactor.

The protein resides in the cytoplasm. The enzyme catalyses [[Fe-S] cluster scaffold protein carrying a second [4Fe-4S](2+) cluster] + N(6)-octanoyl-L-lysyl-[protein] + 2 oxidized [2Fe-2S]-[ferredoxin] + 2 S-adenosyl-L-methionine + 4 H(+) = [[Fe-S] cluster scaffold protein] + N(6)-[(R)-dihydrolipoyl]-L-lysyl-[protein] + 4 Fe(3+) + 2 hydrogen sulfide + 2 5'-deoxyadenosine + 2 L-methionine + 2 reduced [2Fe-2S]-[ferredoxin]. It functions in the pathway protein modification; protein lipoylation via endogenous pathway; protein N(6)-(lipoyl)lysine from octanoyl-[acyl-carrier-protein]: step 2/2. Its function is as follows. Catalyzes the radical-mediated insertion of two sulfur atoms into the C-6 and C-8 positions of the octanoyl moiety bound to the lipoyl domains of lipoate-dependent enzymes, thereby converting the octanoylated domains into lipoylated derivatives. In Photorhabdus laumondii subsp. laumondii (strain DSM 15139 / CIP 105565 / TT01) (Photorhabdus luminescens subsp. laumondii), this protein is Lipoyl synthase.